The chain runs to 417 residues: Serine hydroxymethyltransferase (417 aa).

(6S)-5,6,7,8-tetrahydrofolate contacts are provided by residues leucine 121 and 125–127; that span reads GHL. Lysine 229 carries the N6-(pyridoxal phosphate)lysine modification. Residue 354–356 coordinates (6S)-5,6,7,8-tetrahydrofolate; sequence SPF.

It belongs to the SHMT family. Homodimer. It depends on pyridoxal 5'-phosphate as a cofactor.

The protein localises to the cytoplasm. It catalyses the reaction (6R)-5,10-methylene-5,6,7,8-tetrahydrofolate + glycine + H2O = (6S)-5,6,7,8-tetrahydrofolate + L-serine. It functions in the pathway one-carbon metabolism; tetrahydrofolate interconversion. It participates in amino-acid biosynthesis; glycine biosynthesis; glycine from L-serine: step 1/1. Functionally, catalyzes the reversible interconversion of serine and glycine with tetrahydrofolate (THF) serving as the one-carbon carrier. This reaction serves as the major source of one-carbon groups required for the biosynthesis of purines, thymidylate, methionine, and other important biomolecules. Also exhibits THF-independent aldolase activity toward beta-hydroxyamino acids, producing glycine and aldehydes, via a retro-aldol mechanism. This is Serine hydroxymethyltransferase from Azotobacter vinelandii (strain DJ / ATCC BAA-1303).